The sequence spans 669 residues: UvrABC system protein B (669 aa).

In terms of domain architecture, Helicase ATP-binding spans 26–183; the sequence is EGLEDGLAHQ…RRLADLQYTR (158 aa). 39 to 46 serves as a coordination point for ATP; the sequence is GVTGSGKT. The Beta-hairpin motif lies at 92 to 115; the sequence is YYDYYQPEAYVPSSDTFIEKDASV. A Helicase C-terminal domain is found at 431–593; the sequence is QVDDLLSEIR…IVPKGLNKKI (163 aa). The 36-residue stretch at 629 to 664 folds into the UVR domain; the sequence is EKEIQRLETEMYQHAKDLEFEKAAQTRDKLQTLRAQ.

The protein belongs to the UvrB family. Forms a heterotetramer with UvrA during the search for lesions. Interacts with UvrC in an incision complex.

The protein resides in the cytoplasm. The UvrABC repair system catalyzes the recognition and processing of DNA lesions. A damage recognition complex composed of 2 UvrA and 2 UvrB subunits scans DNA for abnormalities. Upon binding of the UvrA(2)B(2) complex to a putative damaged site, the DNA wraps around one UvrB monomer. DNA wrap is dependent on ATP binding by UvrB and probably causes local melting of the DNA helix, facilitating insertion of UvrB beta-hairpin between the DNA strands. Then UvrB probes one DNA strand for the presence of a lesion. If a lesion is found the UvrA subunits dissociate and the UvrB-DNA preincision complex is formed. This complex is subsequently bound by UvrC and the second UvrB is released. If no lesion is found, the DNA wraps around the other UvrB subunit that will check the other stand for damage. The polypeptide is UvrABC system protein B (Proteus mirabilis (strain HI4320)).